The following is a 645-amino-acid chain: 1-deoxy-D-xylulose-5-phosphate synthase (645 aa).

Thiamine diphosphate-binding positions include histidine 79 and 120–122 (AHS). Mg(2+) is bound at residue aspartate 155. Thiamine diphosphate is bound by residues 156–157 (GA), asparagine 184, tyrosine 293, and glutamate 375. Asparagine 184 contributes to the Mg(2+) binding site.

It belongs to the transketolase family. DXPS subfamily. In terms of assembly, homodimer. The cofactor is Mg(2+). Thiamine diphosphate serves as cofactor.

The catalysed reaction is D-glyceraldehyde 3-phosphate + pyruvate + H(+) = 1-deoxy-D-xylulose 5-phosphate + CO2. It participates in metabolic intermediate biosynthesis; 1-deoxy-D-xylulose 5-phosphate biosynthesis; 1-deoxy-D-xylulose 5-phosphate from D-glyceraldehyde 3-phosphate and pyruvate: step 1/1. In terms of biological role, catalyzes the acyloin condensation reaction between C atoms 2 and 3 of pyruvate and glyceraldehyde 3-phosphate to yield 1-deoxy-D-xylulose-5-phosphate (DXP). The sequence is that of 1-deoxy-D-xylulose-5-phosphate synthase from Ruegeria sp. (strain TM1040) (Silicibacter sp.).